The following is a 340-amino-acid chain: MDRIVEIEKADFEEEIETSLRPTSFDDYIGQSKIKENLKVFIAAAKKRAECLDHVLFYGPPGLGKTTLAHIIANEMGVSIKITAAPMIEKSGDLAAILTNLEENDVLFIDEIHRLSSAIEEVLYSAMEDFRLDIIIGSGPAAQTIKIDIPKFTLIGATTRAGMISAPLRDRFGMQFRLNFYTSDELAKIVQIAAVKLNKECEKNAALQIAKRSRGTPRIALRLLKRIRDFAEVNNENIINENRAKSSLDALGVNDLGFDEMDLKYLEILGSTKNRALGLSTISAALSEDEGTIEDVIEPYLLANGYIERTAKGRIITAKSCEILGIKYKMTQKGLFDEDQ.

The large ATPase domain (RuvB-L) stretch occupies residues 1–181 (MDRIVEIEKA…FGMQFRLNFY (181 aa)). Residues Leu20, Arg21, Gly62, Lys65, Thr66, Thr67, 128–130 (EDF), Arg171, Tyr181, and Arg218 each bind ATP. Thr66 provides a ligand contact to Mg(2+). Positions 182 to 252 (TSDELAKIVQ…RAKSSLDALG (71 aa)) are small ATPAse domain (RuvB-S). Residues 255–340 (DLGFDEMDLK…TQKGLFDEDQ (86 aa)) are head domain (RuvB-H). 2 residues coordinate DNA: Arg309 and Arg314.

The protein belongs to the RuvB family. As to quaternary structure, homohexamer. Forms an RuvA(8)-RuvB(12)-Holliday junction (HJ) complex. HJ DNA is sandwiched between 2 RuvA tetramers; dsDNA enters through RuvA and exits via RuvB. An RuvB hexamer assembles on each DNA strand where it exits the tetramer. Each RuvB hexamer is contacted by two RuvA subunits (via domain III) on 2 adjacent RuvB subunits; this complex drives branch migration. In the full resolvosome a probable DNA-RuvA(4)-RuvB(12)-RuvC(2) complex forms which resolves the HJ.

It is found in the cytoplasm. The enzyme catalyses ATP + H2O = ADP + phosphate + H(+). In terms of biological role, the RuvA-RuvB-RuvC complex processes Holliday junction (HJ) DNA during genetic recombination and DNA repair, while the RuvA-RuvB complex plays an important role in the rescue of blocked DNA replication forks via replication fork reversal (RFR). RuvA specifically binds to HJ cruciform DNA, conferring on it an open structure. The RuvB hexamer acts as an ATP-dependent pump, pulling dsDNA into and through the RuvAB complex. RuvB forms 2 homohexamers on either side of HJ DNA bound by 1 or 2 RuvA tetramers; 4 subunits per hexamer contact DNA at a time. Coordinated motions by a converter formed by DNA-disengaged RuvB subunits stimulates ATP hydrolysis and nucleotide exchange. Immobilization of the converter enables RuvB to convert the ATP-contained energy into a lever motion, pulling 2 nucleotides of DNA out of the RuvA tetramer per ATP hydrolyzed, thus driving DNA branch migration. The RuvB motors rotate together with the DNA substrate, which together with the progressing nucleotide cycle form the mechanistic basis for DNA recombination by continuous HJ branch migration. Branch migration allows RuvC to scan DNA until it finds its consensus sequence, where it cleaves and resolves cruciform DNA. The sequence is that of Holliday junction branch migration complex subunit RuvB from Campylobacter hominis (strain ATCC BAA-381 / DSM 21671 / CCUG 45161 / LMG 19568 / NCTC 13146 / CH001A).